A 212-amino-acid chain; its full sequence is Thymidylate kinase (212 aa).

10-17 (GPEGAGKT) contacts ATP.

The protein belongs to the thymidylate kinase family.

It catalyses the reaction dTMP + ATP = dTDP + ADP. Its function is as follows. Phosphorylation of dTMP to form dTDP in both de novo and salvage pathways of dTTP synthesis. This is Thymidylate kinase from Bacillus velezensis (strain DSM 23117 / BGSC 10A6 / LMG 26770 / FZB42) (Bacillus amyloliquefaciens subsp. plantarum).